Reading from the N-terminus, the 541-residue chain is Protein panoramix (541 aa).

Residues 1–169 (MEAPMKLEVK…TLVPDEQQSF (169 aa)) are interaction with Piwi. 2 disordered regions span residues 52–75 (SDPEDGNLVHHSATPTSDEHLQPS) and 198–281 (TAEN…TELD). The stretch at 194–216 (MLEMTAENRKVKHKKKKHKKERS) forms a coiled coil. Residues 203–220 (KVKHKKKKHKKERSHRSN) show a composition bias toward basic residues. Basic and acidic residues-rich tracts occupy residues 241–251 (DDKNQFDCDYR) and 269–279 (SSKERKLRDTE). Positions 315-343 (LSKADKRSLAVARAELVLEQIQQKANKEE) are nxf2-interacting region (NIR). Residues 323–343 (LAVARAELVLEQIQQKANKEE) are a coiled coil. A necessary for interaction with nxf2 and protein stability region spans residues 387-446 (TPGTRIDLSKWGLETVPEATKRLLRLLGIDVARLKELQSTVKPSQRILKLKKEQLEQGLA).

As to quaternary structure, in the ovaries, part of a complex composed of at least Panx, nxf2, piwi and Nxt1. The complex is knowns as Panx-induced cotranscriptional silencing (PICTS) complex, Panx-nxf2-dependent TAP/p15 silencing (Pandas complex), SFiNX (silencing factor interacting nuclear export variant) or piwi-Panx-nxf2-p15 (PPNP) complex. Interacts (via NIR region) with nxf2 (via TAP-C domain); the interaction is direct. Expressed in female gonads (at protein level).

It is found in the nucleus. In terms of biological role, acts via the piwi-interacting RNA (piRNA) pathway which mediates the repression of transposable elements during meiosis by forming complexes composed of piRNAs and piwi proteins and governs the methylation and subsequent repression of transposons. Required for transcriptional silencing of transposons targeted by piwi and confers its effects by interacting with nascent RNA transcripts. Likely to be recruited to nascent transcripts cotranscriptionally by piwi and to recruit additional factors involved in transcriptional silencing. In the ovaries, forms a complex with nxf2, piwi and Nxt1 which acts as effectors of cotranscriptional transposon silencing. The interaction with nxf2 stabilizes the nuclear protein complex. The protein is Protein panoramix of Drosophila melanogaster (Fruit fly).